Consider the following 384-residue polypeptide: Flap endonuclease 1 (384 aa).

The interval 1 to 108 (MGIHKLMDLL…GELARRQKAK (108 aa)) is N-domain. D34 contacts Mg(2+). DNA is bound at residue R74. D90, E162, E164, D183, and D185 together coordinate Mg(2+). An I-domain region spans residues 126–254 (EALKQEQRNL…VNAFKLITEH (129 aa)). E162 serves as a coordination point for DNA. G232 and D234 together coordinate DNA. D234 contacts Mg(2+). The disordered stretch occupies residues 340–384 (AKEHKGSQTRLNDFFKVQPKDTSSTSKASKKPTNTKSANKKGGKK). The tract at residues 346 to 354 (SQTRLNDFF) is interaction with PCNA. A compositionally biased stretch (low complexity) spans 359-376 (KDTSSTSKASKKPTNTKS).

Belongs to the XPG/RAD2 endonuclease family. FEN1 subfamily. Interacts with PCNA. Three molecules of FEN1 bind to one PCNA trimer with each molecule binding to one PCNA monomer. PCNA stimulates the nuclease activity without altering cleavage specificity. Mg(2+) serves as cofactor. Phosphorylated. Phosphorylation upon DNA damage induces relocalization to the nuclear plasma.

Its subcellular location is the nucleus. It localises to the nucleolus. It is found in the nucleoplasm. The protein resides in the mitochondrion. Functionally, structure-specific nuclease with 5'-flap endonuclease and 5'-3' exonuclease activities involved in DNA replication and repair. During DNA replication, cleaves the 5'-overhanging flap structure that is generated by displacement synthesis when DNA polymerase encounters the 5'-end of a downstream Okazaki fragment. It enters the flap from the 5'-end and then tracks to cleave the flap base, leaving a nick for ligation. Also involved in the long patch base excision repair (LP-BER) pathway, by cleaving within the apurinic/apyrimidinic (AP) site-terminated flap. Acts as a genome stabilization factor that prevents flaps from equilibrating into structures that lead to duplications and deletions. Also possesses 5'-3' exonuclease activity on nicked or gapped double-stranded DNA, and exhibits RNase H activity. Also involved in replication and repair of rDNA and in repairing mitochondrial DNA. The sequence is that of Flap endonuclease 1 from Tetrahymena thermophila (strain SB210).